The sequence spans 62 residues: Photosystem II reaction center protein Z (62 aa).

A run of 2 helical transmembrane segments spans residues 8–28 and 41–61; these read AVFA…VVFA and FSGT…NSLI.

Belongs to the PsbZ family. As to quaternary structure, PSII is composed of 1 copy each of membrane proteins PsbA, PsbB, PsbC, PsbD, PsbE, PsbF, PsbH, PsbI, PsbJ, PsbK, PsbL, PsbM, PsbT, PsbY, PsbZ, Psb30/Ycf12, at least 3 peripheral proteins of the oxygen-evolving complex and a large number of cofactors. It forms dimeric complexes.

It is found in the plastid. The protein resides in the chloroplast thylakoid membrane. Its function is as follows. May control the interaction of photosystem II (PSII) cores with the light-harvesting antenna, regulates electron flow through the 2 photosystem reaction centers. PSII is a light-driven water plastoquinone oxidoreductase, using light energy to abstract electrons from H(2)O, generating a proton gradient subsequently used for ATP formation. The protein is Photosystem II reaction center protein Z of Spinacia oleracea (Spinach).